Consider the following 814-residue polypeptide: Immunoglobulin superfamily DCC subclass member 3 (814 aa).

Positions Met1–Gly35 are cleaved as a signal peptide. 4 Ig-like C2-type domains span residues Leu36–Ser139, Asp140–Ser220, Pro238–Gln321, and Pro329–Thr416. Intrachain disulfides connect Cys63/Cys117 and Cys160/Cys209. Asn93 carries an N-linked (GlcNAc...) asparagine glycan. An N-linked (GlcNAc...) asparagine glycan is attached at Asn246. Cystine bridges form between Cys259/Cys307 and Cys351/Cys400. N-linked (GlcNAc...) asparagine glycosylation is found at Asn381 and Asn382. 2 Fibronectin type-III domains span residues Pro426–Glu520 and Ala523–Arg618. N-linked (GlcNAc...) asparagine glycosylation is found at Asn580, Asn604, and Asn634. A helical transmembrane segment spans residues Ile641–Phe661. 2 disordered regions span residues Pro722 to Pro743 and Gly762 to Gln814. The span at Thr770 to Ala781 shows a compositional bias: low complexity.

It belongs to the immunoglobulin superfamily. DCC family.

The protein localises to the membrane. The protein is Immunoglobulin superfamily DCC subclass member 3 (IGDCC3) of Homo sapiens (Human).